We begin with the raw amino-acid sequence, 302 residues long: uncharacterized protein (302 aa).

This is an uncharacterized protein from Schizosaccharomyces pombe (strain 972 / ATCC 24843) (Fission yeast).